The chain runs to 188 residues: Adenine phosphoribosyltransferase (188 aa).

It belongs to the purine/pyrimidine phosphoribosyltransferase family. Homodimer.

It localises to the cytoplasm. It catalyses the reaction AMP + diphosphate = 5-phospho-alpha-D-ribose 1-diphosphate + adenine. It functions in the pathway purine metabolism; AMP biosynthesis via salvage pathway; AMP from adenine: step 1/1. Functionally, catalyzes a salvage reaction resulting in the formation of AMP, that is energically less costly than de novo synthesis. This is Adenine phosphoribosyltransferase from Paraburkholderia phytofirmans (strain DSM 17436 / LMG 22146 / PsJN) (Burkholderia phytofirmans).